We begin with the raw amino-acid sequence, 576 residues long: Phosphoenolpyruvate-protein phosphotransferase (576 aa).

Histidine 189 functions as the Tele-phosphohistidine intermediate in the catalytic mechanism. Residues arginine 296 and arginine 332 each coordinate phosphoenolpyruvate. Glutamate 431 and aspartate 455 together coordinate Mg(2+). Residues asparagine 454–aspartate 455 and arginine 465 contribute to the phosphoenolpyruvate site. Residue cysteine 502 is the Proton donor of the active site.

This sequence belongs to the PEP-utilizing enzyme family. Homodimer. Mg(2+) is required as a cofactor.

Its subcellular location is the cytoplasm. The enzyme catalyses L-histidyl-[protein] + phosphoenolpyruvate = N(pros)-phospho-L-histidyl-[protein] + pyruvate. Functionally, general (non sugar-specific) component of the phosphoenolpyruvate-dependent sugar phosphotransferase system (sugar PTS). This major carbohydrate active-transport system catalyzes the phosphorylation of incoming sugar substrates concomitantly with their translocation across the cell membrane. Enzyme I transfers the phosphoryl group from phosphoenolpyruvate (PEP) to the phosphoryl carrier protein (HPr). This Buchnera aphidicola subsp. Baizongia pistaciae (strain Bp) protein is Phosphoenolpyruvate-protein phosphotransferase (ptsI).